The sequence spans 256 residues: tRNA pseudouridine synthase A (256 aa).

Catalysis depends on aspartate 49, which acts as the Nucleophile. Position 104 (tyrosine 104) interacts with substrate.

It belongs to the tRNA pseudouridine synthase TruA family.

The catalysed reaction is uridine(38/39/40) in tRNA = pseudouridine(38/39/40) in tRNA. Functionally, formation of pseudouridine at positions 38, 39 and 40 in the anticodon stem and loop of transfer RNAs. This chain is tRNA pseudouridine synthase A, found in Methanopyrus kandleri (strain AV19 / DSM 6324 / JCM 9639 / NBRC 100938).